The chain runs to 295 residues: Indole-3-glycerol phosphate synthase (295 aa).

The protein belongs to the TrpC family.

The catalysed reaction is 1-(2-carboxyphenylamino)-1-deoxy-D-ribulose 5-phosphate + H(+) = (1S,2R)-1-C-(indol-3-yl)glycerol 3-phosphate + CO2 + H2O. It functions in the pathway amino-acid biosynthesis; L-tryptophan biosynthesis; L-tryptophan from chorismate: step 4/5. This Synechococcus sp. (strain CC9605) protein is Indole-3-glycerol phosphate synthase.